The following is a 1371-amino-acid chain: Probable serine/threonine-protein kinase DDB_G0293292 (1371 aa).

Protein kinase domains are found at residues 9–269 (NKIL…HPNT) and 1131–1371 (FKEV…QPTL). ATP-binding positions include 15-23 (IDDGNTKRK) and lysine 39. Aspartate 143 serves as the catalytic Proton acceptor.

The protein belongs to the protein kinase superfamily. Ser/Thr protein kinase family.

It catalyses the reaction L-seryl-[protein] + ATP = O-phospho-L-seryl-[protein] + ADP + H(+). The enzyme catalyses L-threonyl-[protein] + ATP = O-phospho-L-threonyl-[protein] + ADP + H(+). In Dictyostelium discoideum (Social amoeba), this protein is Probable serine/threonine-protein kinase DDB_G0293292.